Consider the following 360-residue polypeptide: uncharacterized protein (360 aa).

The region spanning 4–235 is the ABC transporter domain; that stretch reads LSLQHIQKIY…PANMFVAGFI (232 aa). 37 to 44 lines the ATP pocket; that stretch reads GPSGCGKS.

It belongs to the ABC transporter superfamily.

This is an uncharacterized protein from Escherichia coli O6:K15:H31 (strain 536 / UPEC).